A 786-amino-acid polypeptide reads, in one-letter code: MEISTENWCKKPKNRSIFSKNISFQKQNKSTEEPPSSVQKLLASLQQAQNKSDLSEQPSTSKPKKNEKRKKAVAQAPASAPAPGPEEKKKQPKRASVGARMQQQAENARISQTKRPRQVSTSKGSSRNTTAPEQQNYQQQQQQYKGPRIPTDILDELEFRFISNMVECEINDNIRVCFHLELAHWYYIDHMVEDDKISGCPNVGSRDFNFQMCQHCRVLRKYAHRADEVLAKFREYKSTVPTYGAILVDPEMDHVVLVQSYFAKGKNWGFPKGKINQAEPPRDAAIRETFEETGFDFGIYSEKEKKFQRFINDGMVRLYLVKNVPKDFNFQPQTRKEIRKIEWFKIDDLPTDKTDELPAYLQGNKFYMVMPFVKDIQIYVQKEKEKLRRRKAEAVQSTPSSSIFSQLFPAQPPPPVPEDATPTRPMYKRLTSEELFSAFKNPPAGEVARPTLPDMSPAVNGLDTLAVLGICTPLKPGASLNEFSGAPQNCPMISEEAGSPADPSAEIGFAMPMDLKQPVVTSDHPWQHHKISDSSAPPQTLESHQGWLDTQLVNTIMHSPNHPLPPTSNSPATPTAVLGHLIGKPIQPQAILPQAATPTALGSAEKPKSSRISLSDNSAFKAISSTQKQSIPKATAAPPSTEKTRSASLSGSSQVVGKPARNLFNSVVSPVSSGIQSIQGDGGAWEDVWFREQLAATTTAGTSISSLAASNQELAMINREETPIEDPYFKQQAYQKAQKAQSLIPACSQWTNSIKLDIDYVVGPLSFWMQQFSTKSPVSGTGPQLP.

Positions 25–61 (QKQNKSTEEPPSSVQKLLASLQQAQNKSDLSEQPSTS) are enriched in polar residues. The tract at residues 25-148 (QKQNKSTEEP…QQQQQYKGPR (124 aa)) is disordered. Positions 62–72 (KPKKNEKRKKA) are enriched in basic residues. 2 stretches are compositionally biased toward polar residues: residues 101–111 (MQQQAENARIS) and 118–133 (QVST…TAPE). The span at 134 to 144 (QQNYQQQQQQY) shows a compositional bias: low complexity. Positions 238–366 (STVPTYGAIL…LPAYLQGNKF (129 aa)) constitute a Nudix hydrolase domain. Residues 273 to 294 (GKINQAEPPRDAAIRETFEETG) carry the Nudix box motif. Mg(2+) is bound by residues Glu-288 and Glu-292. Disordered regions lie at residues 556–576 (IMHS…TPTA) and 623–655 (ISST…SSQV). 2 stretches are compositionally biased toward polar residues: residues 623-632 (ISSTQKQSIP) and 646-655 (SASLSGSSQV).

It belongs to the Nudix hydrolase family. DCP2 subfamily. In terms of assembly, may be a component of the decapping complex composed of dcap-1 and dcap-2. Mg(2+) is required as a cofactor. The cofactor is Mn(2+). In terms of tissue distribution, expressed in sensory neurons.

The protein localises to the cytoplasmic granule. It is found in the cytoplasm. Its subcellular location is the perinuclear region. It carries out the reaction a 5'-end (N(7)-methyl 5'-triphosphoguanosine)-ribonucleoside in mRNA + H2O = N(7)-methyl-GDP + a 5'-end phospho-ribonucleoside in mRNA + 2 H(+). The catalysed reaction is a 5'-end (N(2),N(2),N(7)-trimethyl 5'-triphosphoguanosine)-ribonucleoside in mRNA + H2O = N(2),N(2),N(7)-trimethyl-GDP + a 5'-end phospho-ribonucleoside in mRNA + 2 H(+). Inhibited by capped and uncapped RNA. Not inhibited by dinucleotide cap or methylated nucleotide analogs. Decapping metalloenzyme that catalyzes the cleavage of the cap structure on mRNAs. Removes the 7-methyl guanine cap structure from mRNA molecules, yielding a 5'-phosphorylated mRNA fragment and 7m-GDP. RNA-decapping enzyme although it does not bind the RNA cap. May contribute to gene regulation in multiple RNA pathways including monomethylguanosine- and trimethylguanosine-capped RNAs. In oocytes, may play a role in the response to stress induced by heat shock, osmotic stress and anoxia. Required for the developmental axon guidance and regrowth of PLM touch receptor neurons. Early in embryogenesis, plays a role in ciliary shape formation in sensory neurons. Promotes survival at high temperatures. This is m7GpppN-mRNA hydrolase dcap-2 from Caenorhabditis elegans.